Reading from the N-terminus, the 545-residue chain is MDFKRLTAFFAIALVIMIGWEKMFPTPKPVPAPQQTAQQQAVTASAEAALAPATPITVTTDTVQAVIDEKSGDLRRLTLLKYKATGDENKPFILFGDGKEYTYVAQSELLDAQGNNILKGIGFSAPKKQYSLEGDKVEVRLSAPETRGLKIDKVYTFTKGSYLVNVRFDIANGSGQTANLSADYRIVRDHSEPEGQGYFTHSYVGPVVYTPEGNFQKVSFSDLDDDAKSGKSEAEYIRKTPTGWLGMIEHHFMSTWILQPKGGQSVCAAGDCRIDIKRRNDKLYSTSVSVPLAAIQNGAKSEASINLYAGPQTTSVIANIADNLQLAKDYGKVHWFASPLFWLLNQLHNIIGNWGWAIIVLTIIVKAVLYPLTNASYRSMAKMRAAAPKLQAIKEKYGDDRMAQQQAMMQLYTDEKINPLGGCLPMLLQIPVFIGLYWALFASVELRQAPWLGWITDLSRADPYYILPIIMAATMFAQTYLNPPPTDPMQAKMMKIMPLVFSVMFFFFPAGLVLYWVVNNLLTIAQQWHINRSIEKQRAQGEVVS.

The next 4 helical transmembrane spans lie at Ile-350–Tyr-370, Leu-424–Val-444, Ala-461–Leu-481, and Pro-498–Val-518.

Belongs to the OXA1/ALB3/YidC family. Type 1 subfamily. Interacts with the Sec translocase complex via SecD. Specifically interacts with transmembrane segments of nascent integral membrane proteins during membrane integration.

Its subcellular location is the cell inner membrane. Required for the insertion and/or proper folding and/or complex formation of integral membrane proteins into the membrane. Involved in integration of membrane proteins that insert both dependently and independently of the Sec translocase complex, as well as at least some lipoproteins. Aids folding of multispanning membrane proteins. This Neisseria meningitidis serogroup C (strain 053442) protein is Membrane protein insertase YidC.